The following is a 310-amino-acid chain: Deoxyribonuclease gamma (310 aa).

The first 25 residues, M1–S25, serve as a signal peptide directing secretion. Residues K40–R56 carry the Bipartite nuclear localization signal motif. Residues E105 and H160 contribute to the active site. C199 and C236 are oxidised to a cystine. The not required for free DNA-nuclease activity but required for activity towards liposome-coated DNA stretch occupies residues S289–S310. A Nuclear localization signal motif is present at residues L301–G307.

This sequence belongs to the DNase I family. Monomer. Ca(2+) is required as a cofactor. The cofactor is Mg(2+). In terms of processing, seems to be synthesized as an inactive precursor protein and converted into an active mature enzyme by removal of the N-terminal precursor peptide during apoptosis. Poly-ADP-ribosylated by PARP1. ADP-ribosylation negatively regulates enzymatic activity during apoptosis. In terms of tissue distribution, detected at high levels in spleen, lymph nodes, thymus and liver. Observed also in kidney and testis, but not in brain or heart.

Its subcellular location is the nucleus. The protein resides in the secreted. With respect to regulation, inhibited by zinc. Its function is as follows. Has DNA hydrolytic activity. Is capable of both single- and double-stranded DNA cleavage, producing DNA fragments with 3'-OH ends. Can cleave chromatin to nucleosomal units and cleaves nucleosomal and liposome-coated DNA. Acts in internucleosomal DNA fragmentation (INDF) during apoptosis and necrosis. The role in apoptosis includes myogenic and neuronal differentiation, and BCR-mediated clonal deletion of self-reactive B cells. Is active on chromatin in apoptotic cell-derived membrane-coated microparticles and thus suppresses anti-DNA autoimmunity. Together with DNASE1, plays a key role in degrading neutrophil extracellular traps (NETs). NETs are mainly composed of DNA fibers and are released by neutrophils to bind pathogens during inflammation. Degradation of intravascular NETs by DNASE1 and DNASE1L3 is required to prevent formation of clots that obstruct blood vessels and cause organ damage following inflammation. In Rattus norvegicus (Rat), this protein is Deoxyribonuclease gamma (Dnase1l3).